Reading from the N-terminus, the 276-residue chain is Ribosomal RNA small subunit methyltransferase A (276 aa).

S-adenosyl-L-methionine is bound by residues His15, Leu17, Gly42, Glu64, Asp89, and Asn108.

Belongs to the class I-like SAM-binding methyltransferase superfamily. rRNA adenine N(6)-methyltransferase family. RsmA subfamily.

Its subcellular location is the cytoplasm. The catalysed reaction is adenosine(1518)/adenosine(1519) in 16S rRNA + 4 S-adenosyl-L-methionine = N(6)-dimethyladenosine(1518)/N(6)-dimethyladenosine(1519) in 16S rRNA + 4 S-adenosyl-L-homocysteine + 4 H(+). Its function is as follows. Specifically dimethylates two adjacent adenosines (A1518 and A1519) in the loop of a conserved hairpin near the 3'-end of 16S rRNA in the 30S particle. May play a critical role in biogenesis of 30S subunits. This Prochlorococcus marinus (strain MIT 9515) protein is Ribosomal RNA small subunit methyltransferase A.